Reading from the N-terminus, the 1150-residue chain is ATP-dependent helicase/deoxyribonuclease subunit B (1150 aa).

8–15 is an ATP binding site; the sequence is GRAGSGKS. [4Fe-4S] cluster contacts are provided by Cys789, Cys1109, Cys1112, and Cys1118.

The protein belongs to the helicase family. AddB/RexB type 1 subfamily. Heterodimer of AddA and AddB. Mg(2+) serves as cofactor. The cofactor is [4Fe-4S] cluster.

Its function is as follows. The heterodimer acts as both an ATP-dependent DNA helicase and an ATP-dependent, dual-direction single-stranded exonuclease. Recognizes the chi site generating a DNA molecule suitable for the initiation of homologous recombination. The AddB subunit has 5' -&gt; 3' nuclease activity but not helicase activity. The polypeptide is ATP-dependent helicase/deoxyribonuclease subunit B (Clostridium kluyveri (strain NBRC 12016)).